The following is a 109-amino-acid chain: Iron-sulfur cluster assembly protein CyaY (109 aa).

Belongs to the frataxin family.

Involved in iron-sulfur (Fe-S) cluster assembly. May act as a regulator of Fe-S biogenesis. In Albidiferax ferrireducens (strain ATCC BAA-621 / DSM 15236 / T118) (Rhodoferax ferrireducens), this protein is Iron-sulfur cluster assembly protein CyaY.